We begin with the raw amino-acid sequence, 94 residues long: Protein RESPONSE TO LOW SULFUR 2 (94 aa).

A coiled-coil region spans residues 15-63 (VDELRRKNGEMEKAVEEMKKEMLQLWRRTQVAEEAEERLCSQLAELEAE).

Functionally, may be involved in defense responses monitoring. Probably implicated into osmotic stress signaling. The polypeptide is Protein RESPONSE TO LOW SULFUR 2 (Arabidopsis thaliana (Mouse-ear cress)).